The sequence spans 137 residues: Small ribosomal subunit protein uS12 (137 aa).

A disordered region spans residues 1–44 (MPTINQLVRKGRKSRTSKSDAPALNFGYNSMKKKATDNPAPQKR). Asp102 carries the post-translational modification 3-methylthioaspartic acid.

It belongs to the universal ribosomal protein uS12 family. Part of the 30S ribosomal subunit. Contacts proteins S8 and S17. May interact with IF1 in the 30S initiation complex.

In terms of biological role, with S4 and S5 plays an important role in translational accuracy. Functionally, interacts with and stabilizes bases of the 16S rRNA that are involved in tRNA selection in the A site and with the mRNA backbone. Located at the interface of the 30S and 50S subunits, it traverses the body of the 30S subunit contacting proteins on the other side and probably holding the rRNA structure together. The combined cluster of proteins S8, S12 and S17 appears to hold together the shoulder and platform of the 30S subunit. The polypeptide is Small ribosomal subunit protein uS12 (Latilactobacillus sakei subsp. sakei (strain 23K) (Lactobacillus sakei subsp. sakei)).